Reading from the N-terminus, the 359-residue chain is GTPase Obg (359 aa).

One can recognise an Obg domain in the interval 1–159; the sequence is MQFIDQAEIQ…RSLRLELKLL (159 aa). The OBG-type G domain maps to 160–328; it reads AEVGIIGLPN…LLHQIWQELE (169 aa). Residues 166 to 173, 191 to 195, 213 to 216, 280 to 283, and 309 to 311 contribute to the GTP site; these read GLPNAGKS, FTTLV, DIPG, NKID, and SAI. Mg(2+) contacts are provided by S173 and T193.

Belongs to the TRAFAC class OBG-HflX-like GTPase superfamily. OBG GTPase family. In terms of assembly, monomer. It depends on Mg(2+) as a cofactor.

Its subcellular location is the cytoplasm. Its function is as follows. An essential GTPase which binds GTP, GDP and possibly (p)ppGpp with moderate affinity, with high nucleotide exchange rates and a fairly low GTP hydrolysis rate. Plays a role in control of the cell cycle, stress response, ribosome biogenesis and in those bacteria that undergo differentiation, in morphogenesis control. This chain is GTPase Obg, found in Cyanothece sp. (strain PCC 7425 / ATCC 29141).